The following is a 183-amino-acid chain: MNKLIPLPREFFARDTNVVSTELIGKTLYFQGKTAIITETESYIGQNDPACHAARGRTKRTDIMFGPAGFSYVYLIYGMYYCLNFVTEAKGFPAATLIRGVHVISPENLYLNGPGKLCKYLGINISHNKCDLINNNAFFVGDIGLKLPYSTTARIGITKGTDKLWRYVVTDITNLISQYNVQP.

This sequence belongs to the DNA glycosylase MPG family.

The sequence is that of Putative 3-methyladenine DNA glycosylase from Rickettsia peacockii (strain Rustic).